A 365-amino-acid chain; its full sequence is 2-aminoethylphosphonate--pyruvate transaminase (365 aa).

Residue K194 is modified to N6-(pyridoxal phosphate)lysine.

Belongs to the class-V pyridoxal-phosphate-dependent aminotransferase family. PhnW subfamily. As to quaternary structure, homodimer. Requires pyridoxal 5'-phosphate as cofactor.

It carries out the reaction (2-aminoethyl)phosphonate + pyruvate = phosphonoacetaldehyde + L-alanine. Involved in phosphonate degradation. This chain is 2-aminoethylphosphonate--pyruvate transaminase, found in Bacillus cytotoxicus (strain DSM 22905 / CIP 110041 / 391-98 / NVH 391-98).